The following is a 404-amino-acid chain: Cysteine desulfurase IscS (404 aa).

Residues 85–86, asparagine 165, glutamine 193, 213–215, and threonine 251 contribute to the pyridoxal 5'-phosphate site; these read GT and SGH. Cysteine 338 functions as the Cysteine persulfide intermediate in the catalytic mechanism. Residue cysteine 338 participates in [2Fe-2S] cluster binding.

This sequence belongs to the class-V pyridoxal-phosphate-dependent aminotransferase family. NifS/IscS subfamily. Homodimer. Forms a heterotetramer with IscU, interacts with other sulfur acceptors. Requires pyridoxal 5'-phosphate as cofactor.

The protein resides in the cytoplasm. It carries out the reaction (sulfur carrier)-H + L-cysteine = (sulfur carrier)-SH + L-alanine. Its pathway is cofactor biosynthesis; iron-sulfur cluster biosynthesis. Functionally, master enzyme that delivers sulfur to a number of partners involved in Fe-S cluster assembly, tRNA modification or cofactor biosynthesis. Catalyzes the removal of elemental sulfur atoms from cysteine to produce alanine. Functions as a sulfur delivery protein for Fe-S cluster synthesis onto IscU, an Fe-S scaffold assembly protein, as well as other S acceptor proteins. In Methanosarcina thermophila, this protein is Cysteine desulfurase IscS.